The sequence spans 152 residues: FMN reductase (NADH) RutF (152 aa).

Belongs to the non-flavoprotein flavin reductase family. RutF subfamily.

The catalysed reaction is FMNH2 + NAD(+) = FMN + NADH + 2 H(+). Functionally, catalyzes the reduction of FMN to FMNH2 which is used to reduce pyrimidine by RutA via the Rut pathway. The protein is FMN reductase (NADH) RutF of Shigella sonnei (strain Ss046).